Here is a 623-residue protein sequence, read N- to C-terminus: Endoglucanase 12 (623 aa).

The Cytoplasmic segment spans residues 1-73 (MYSANHWGGS…LGCVVVKRKL (73 aa)). A helical; Signal-anchor for type II membrane protein membrane pass occupies residues 74-94 (LWWVLWTLLAAFILIGLPVII). Residues 95–623 (AKSIPKKKPH…TPPPPSKWKP (529 aa)) lie on the Extracellular side of the membrane. Asp-166 acts as the Nucleophile in catalysis. Asn-217, Asn-236, Asn-324, Asn-345, Asn-408, and Asn-425 each carry an N-linked (GlcNAc...) asparagine glycan. Active-site residues include His-513, Asp-561, and Glu-570.

This sequence belongs to the glycosyl hydrolase 9 (cellulase E) family. Ubiquitous.

The protein resides in the membrane. The catalysed reaction is Endohydrolysis of (1-&gt;4)-beta-D-glucosidic linkages in cellulose, lichenin and cereal beta-D-glucans.. This chain is Endoglucanase 12 (GLU3), found in Oryza sativa subsp. japonica (Rice).